The chain runs to 49 residues: Large ribosomal subunit protein bL33B (49 aa).

This sequence belongs to the bacterial ribosomal protein bL33 family.

The sequence is that of Large ribosomal subunit protein bL33B from Lactobacillus delbrueckii subsp. bulgaricus (strain ATCC BAA-365 / Lb-18).